The primary structure comprises 157 residues: uncharacterized protein (157 aa).

Disordered stretches follow at residues 76-105 (AINQ…GPRG) and 132-157 (VRAP…RMRG). The segment covering 135-148 (PSTKPSKTSSSNNP) has biased composition (low complexity).

To M.pneumoniae MPN_091 and MPN_413.

This is an uncharacterized protein from Mycoplasma pneumoniae (strain ATCC 29342 / M129 / Subtype 1) (Mycoplasmoides pneumoniae).